A 296-amino-acid chain; its full sequence is Probable 2-(5''-triphosphoribosyl)-3'-dephosphocoenzyme-A synthase (296 aa).

This sequence belongs to the CitG/MdcB family.

It carries out the reaction 3'-dephospho-CoA + ATP = 2'-(5''-triphospho-alpha-D-ribosyl)-3'-dephospho-CoA + adenine. This Streptococcus mutans serotype c (strain ATCC 700610 / UA159) protein is Probable 2-(5''-triphosphoribosyl)-3'-dephosphocoenzyme-A synthase.